The following is a 247-amino-acid chain: NAD(P)H-quinone oxidoreductase subunit K (247 aa).

[4Fe-4S] cluster-binding residues include Cys-63, Cys-64, Cys-128, and Cys-159.

Belongs to the complex I 20 kDa subunit family. NDH-1 can be composed of about 15 different subunits; different subcomplexes with different compositions have been identified which probably have different functions. [4Fe-4S] cluster is required as a cofactor.

The protein localises to the cellular thylakoid membrane. It carries out the reaction a plastoquinone + NADH + (n+1) H(+)(in) = a plastoquinol + NAD(+) + n H(+)(out). The catalysed reaction is a plastoquinone + NADPH + (n+1) H(+)(in) = a plastoquinol + NADP(+) + n H(+)(out). Its function is as follows. NDH-1 shuttles electrons from an unknown electron donor, via FMN and iron-sulfur (Fe-S) centers, to quinones in the respiratory and/or the photosynthetic chain. The immediate electron acceptor for the enzyme in this species is believed to be plastoquinone. Couples the redox reaction to proton translocation, and thus conserves the redox energy in a proton gradient. Cyanobacterial NDH-1 also plays a role in inorganic carbon-concentration. The polypeptide is NAD(P)H-quinone oxidoreductase subunit K (Microcystis aeruginosa (strain NIES-843 / IAM M-2473)).